Reading from the N-terminus, the 161-residue chain is MKYDTSELCDIYQEDVNVVEPLFSNFGGRASFGGQIITVKCFEDNGLLYDLLEQNGRGRVLVVDGGGSVRRALVDAELARLAVQNEWEGLVIYGAVRQVDDLEELDIGIQAMAAIPVGAAGESIGESDVRVNFGGVTFFSGDHLYADNTGIILSEDPLDIE.

The protein belongs to the RraA family. Homotrimer. Binds to both RNA-binding sites in the C-terminal region of Rne and to RhlB.

It localises to the cytoplasm. In terms of biological role, globally modulates RNA abundance by binding to RNase E (Rne) and regulating its endonucleolytic activity. Can modulate Rne action in a substrate-dependent manner by altering the composition of the degradosome. Modulates RNA-binding and helicase activities of the degradosome. The protein is Regulator of ribonuclease activity A of Shigella flexneri serotype 5b (strain 8401).